Reading from the N-terminus, the 351-residue chain is Methionine import ATP-binding protein MetN (351 aa).

Positions 2-238 (IKLNHINKTY…PKHPITRELI (237 aa)) constitute an ABC transporter domain. 35 to 42 (GYSGAGKS) provides a ligand contact to ATP.

This sequence belongs to the ABC transporter superfamily. Methionine importer (TC 3.A.1.24) family. As to quaternary structure, the complex is composed of two ATP-binding proteins (MetN), two transmembrane proteins (MetI) and a solute-binding protein (MetQ).

It localises to the cell inner membrane. The enzyme catalyses L-methionine(out) + ATP + H2O = L-methionine(in) + ADP + phosphate + H(+). It catalyses the reaction D-methionine(out) + ATP + H2O = D-methionine(in) + ADP + phosphate + H(+). Functionally, part of the ABC transporter complex MetNIQ involved in methionine import. Responsible for energy coupling to the transport system. This chain is Methionine import ATP-binding protein MetN, found in Helicobacter hepaticus (strain ATCC 51449 / 3B1).